A 158-amino-acid chain; its full sequence is 2-amino-4-hydroxy-6-hydroxymethyldihydropteridine pyrophosphokinase (158 aa).

This sequence belongs to the HPPK family.

It catalyses the reaction 6-hydroxymethyl-7,8-dihydropterin + ATP = (7,8-dihydropterin-6-yl)methyl diphosphate + AMP + H(+). The protein operates within cofactor biosynthesis; tetrahydrofolate biosynthesis; 2-amino-4-hydroxy-6-hydroxymethyl-7,8-dihydropteridine diphosphate from 7,8-dihydroneopterin triphosphate: step 4/4. In terms of biological role, catalyzes the transfer of pyrophosphate from adenosine triphosphate (ATP) to 6-hydroxymethyl-7,8-dihydropterin, an enzymatic step in folate biosynthesis pathway. This chain is 2-amino-4-hydroxy-6-hydroxymethyldihydropteridine pyrophosphokinase (folK), found in Methylorubrum extorquens (strain ATCC 14718 / DSM 1338 / JCM 2805 / NCIMB 9133 / AM1) (Methylobacterium extorquens).